We begin with the raw amino-acid sequence, 658 residues long: Integrator complex subunit 9 (658 aa).

K58 is covalently cross-linked (Glycyl lysine isopeptide (Lys-Gly) (interchain with G-Cter in SUMO2)). Residues 548-573 (DNKHVLQPPPRPTQPTGGKKRKRASD) are disordered. The Nuclear localization signal motif lies at 566–570 (KKRKR).

The protein belongs to the metallo-beta-lactamase superfamily. RNA-metabolizing metallo-beta-lactamase-like family. INTS9 subfamily. As to quaternary structure, component of the Integrator complex, composed of core subunits INTS1, INTS2, INTS3, INTS4, INTS5, INTS6, INTS7, INTS8, INTS9/RC74, INTS10, INTS11/CPSF3L, INTS12, INTS13, INTS14 and INTS15. The core complex associates with protein phosphatase 2A subunits PPP2CA and PPP2R1A, to form the Integrator-PP2A (INTAC) complex. INTS9 is part of the RNA endonuclease subcomplex, composed of INTS4, INTS9, INTS11 and inositol hexakisphosphate (InsP6). Interacts with WDR73; interaction is required for the assembly of the RNA endonuclease subcomplex in the cytoplasm. Interacts with BRAT1; interaction is required for the assembly of the RNA endonuclease subcomplex. Interacts with ESRRB, ESRRB is not a core component of the Integrator complex and this association is a bridge for the interaction with the multiprotein complex Integrator; attracts the transcriptional machinery.

It is found in the nucleus. The protein localises to the cytoplasm. Its function is as follows. Component of the integrator complex, a multiprotein complex that terminates RNA polymerase II (Pol II) transcription in the promoter-proximal region of genes. The integrator complex provides a quality checkpoint during transcription elongation by driving premature transcription termination of transcripts that are unfavorably configured for transcriptional elongation: the complex terminates transcription by (1) catalyzing dephosphorylation of the C-terminal domain (CTD) of Pol II subunit POLR2A/RPB1 and SUPT5H/SPT5, (2) degrading the exiting nascent RNA transcript via endonuclease activity and (3) promoting the release of Pol II from bound DNA. The integrator complex is also involved in terminating the synthesis of non-coding Pol II transcripts, such as enhancer RNAs (eRNAs), small nuclear RNAs (snRNAs), telomerase RNAs and long non-coding RNAs (lncRNAs). Mediates recruitment of cytoplasmic dynein to the nuclear envelope, probably as component of the integrator complex. The sequence is that of Integrator complex subunit 9 (INTS9) from Bos taurus (Bovine).